Reading from the N-terminus, the 246-residue chain is Ribonuclease 3 (246 aa).

The RNase III domain occupies 8–137 (ANRLKTRLGF…LLGAIYLDQG (130 aa)). Position 50 (Glu-50) interacts with Mg(2+). Residue Asp-54 is part of the active site. Positions 123 and 126 each coordinate Mg(2+). The active site involves Glu-126. The DRBM domain occupies 164-233 (DYKTELQEIL…AKDAFQHLEG (70 aa)). The interval 212 to 246 (SGHSKKEAEQQAAKDAFQHLEGMGKSGHKSAGPIR) is disordered.

The protein belongs to the ribonuclease III family. In terms of assembly, homodimer. Mg(2+) serves as cofactor.

The protein resides in the cytoplasm. It catalyses the reaction Endonucleolytic cleavage to 5'-phosphomonoester.. Functionally, digests double-stranded RNA. Involved in the processing of primary rRNA transcript to yield the immediate precursors to the large and small rRNAs (23S and 16S). Processes some mRNAs, and tRNAs when they are encoded in the rRNA operon. Processes pre-crRNA and tracrRNA of type II CRISPR loci if present in the organism. This Desulforamulus reducens (strain ATCC BAA-1160 / DSM 100696 / MI-1) (Desulfotomaculum reducens) protein is Ribonuclease 3.